A 142-amino-acid chain; its full sequence is Small heat shock protein IbpB (142 aa).

The 112-residue stretch at 26-137 folds into the sHSP domain; that stretch reads SGESQSFPPY…PPQRIAINER (112 aa).

The protein belongs to the small heat shock protein (HSP20) family. In terms of assembly, homodimer. Forms homomultimers of about 100-150 subunits at optimal growth temperatures. Conformation changes to oligomers at high temperatures or high ionic concentrations. The decrease in size of the multimers is accompanied by an increase in chaperone activity.

Its subcellular location is the cytoplasm. Its function is as follows. Associates with aggregated proteins, together with IbpA, to stabilize and protect them from irreversible denaturation and extensive proteolysis during heat shock and oxidative stress. Aggregated proteins bound to the IbpAB complex are more efficiently refolded and reactivated by the ATP-dependent chaperone systems ClpB and DnaK/DnaJ/GrpE. Its activity is ATP-independent. This chain is Small heat shock protein IbpB, found in Salmonella typhi.